We begin with the raw amino-acid sequence, 244 residues long: MTDSHVPHPESPAVEEGEERPHRRIKSFVMRAGRMTEGQQRGLDQGLPLYGLSLTDAPVDFDQVFGRAAPRTLEIGFGMGHSLLEMAAAAPEHDFIGVEVHSPGVGALLNGVLTQGLTNVRVYDCDAIEVLNRCVADNSLDRLMLFFPDPWHKSRHHKRRIVQPEFAALVRSKLKVGGVFHMATDWGPYAEYMLEVMSVASGYRNQAEDNQYVPRPAERPITKFERRGEKLGHGVWDLKFEKVD.

A disordered region spans residues 1–24 (MTDSHVPHPESPAVEEGEERPHRR). Residues glutamate 74, glutamate 99, aspartate 126, and aspartate 149 each contribute to the S-adenosyl-L-methionine site. Aspartate 149 is an active-site residue. Residues lysine 153, aspartate 185, and 222–225 (TKFE) each bind substrate.

It belongs to the class I-like SAM-binding methyltransferase superfamily. TrmB family.

The catalysed reaction is guanosine(46) in tRNA + S-adenosyl-L-methionine = N(7)-methylguanosine(46) in tRNA + S-adenosyl-L-homocysteine. Its pathway is tRNA modification; N(7)-methylguanine-tRNA biosynthesis. In terms of biological role, catalyzes the formation of N(7)-methylguanine at position 46 (m7G46) in tRNA. This Pseudomonas savastanoi pv. phaseolicola (strain 1448A / Race 6) (Pseudomonas syringae pv. phaseolicola (strain 1448A / Race 6)) protein is tRNA (guanine-N(7)-)-methyltransferase.